The following is a 489-amino-acid chain: Putative ABC transporter ATP-binding protein TDE_0282 (489 aa).

ABC transporter domains are found at residues 2–241 and 269–487; these read ITLR…SMKL and FAVK…MQLE. ATP contacts are provided by residues 36-43 and 301-308; these read GASGCGKT and GENGAGKT.

The protein belongs to the ABC transporter superfamily.

The protein resides in the cell inner membrane. Functionally, probably part of an ABC transporter complex. Responsible for energy coupling to the transport system. The protein is Putative ABC transporter ATP-binding protein TDE_0282 of Treponema denticola (strain ATCC 35405 / DSM 14222 / CIP 103919 / JCM 8153 / KCTC 15104).